We begin with the raw amino-acid sequence, 259 residues long: Pyridoxine 5'-phosphate synthase (259 aa).

N6 provides a ligand contact to 3-amino-2-oxopropyl phosphate. 8-9 (DH) is a 1-deoxy-D-xylulose 5-phosphate binding site. R17 lines the 3-amino-2-oxopropyl phosphate pocket. The active-site Proton acceptor is H42. 2 residues coordinate 1-deoxy-D-xylulose 5-phosphate: R44 and H49. E69 acts as the Proton acceptor in catalysis. T99 contacts 1-deoxy-D-xylulose 5-phosphate. The active-site Proton donor is the H212. 3-amino-2-oxopropyl phosphate is bound by residues G213 and 234-235 (GH).

It belongs to the PNP synthase family. Homooctamer; tetramer of dimers.

It localises to the cytoplasm. The catalysed reaction is 3-amino-2-oxopropyl phosphate + 1-deoxy-D-xylulose 5-phosphate = pyridoxine 5'-phosphate + phosphate + 2 H2O + H(+). Its pathway is cofactor biosynthesis; pyridoxine 5'-phosphate biosynthesis; pyridoxine 5'-phosphate from D-erythrose 4-phosphate: step 5/5. In terms of biological role, catalyzes the complicated ring closure reaction between the two acyclic compounds 1-deoxy-D-xylulose-5-phosphate (DXP) and 3-amino-2-oxopropyl phosphate (1-amino-acetone-3-phosphate or AAP) to form pyridoxine 5'-phosphate (PNP) and inorganic phosphate. The chain is Pyridoxine 5'-phosphate synthase from Nautilia profundicola (strain ATCC BAA-1463 / DSM 18972 / AmH).